A 63-amino-acid polypeptide reads, in one-letter code: Cytochrome c oxidase subunit 7C, mitochondrial (63 aa).

A mitochondrion-targeting transit peptide spans 1–16; sequence MLGQSIRRFTTSVVRR. Topologically, residues 17–33 are mitochondrial matrix; the sequence is SHYEEGPGKNIPFSVEN. Residue K25 is modified to N6-acetyllysine; alternate. The residue at position 25 (K25) is an N6-succinyllysine; alternate. The helical transmembrane segment at 34–60 threads the bilayer; sequence KWRLLAMMTLFFGSGFAAPFFIVRHQL. The Mitochondrial intermembrane segment spans residues 61-63; sequence LKK.

The protein belongs to the cytochrome c oxidase VIIc family. In terms of assembly, component of the cytochrome c oxidase (complex IV, CIV), a multisubunit enzyme composed of 14 subunits. The complex is composed of a catalytic core of 3 subunits MT-CO1, MT-CO2 and MT-CO3, encoded in the mitochondrial DNA, and 11 supernumerary subunits COX4I1 (or COX4I2), COX5A, COX5B, COX6A2 (or COX6A1), COX6B1 (or COX6B2), COX6C, COX7A1 (or COX7A2), COX7B, COX7C, COX8B and NDUFA4, which are encoded in the nuclear genome. The complex exists as a monomer or a dimer and forms supercomplexes (SCs) in the inner mitochondrial membrane with NADH-ubiquinone oxidoreductase (complex I, CI) and ubiquinol-cytochrome c oxidoreductase (cytochrome b-c1 complex, complex III, CIII), resulting in different assemblies (supercomplex SCI(1)III(2)IV(1) and megacomplex MCI(2)III(2)IV(2)). Interacts with RAB5IF. As to expression, liver, heart, muscle and brain, contain the same isoform of COX VIIc, but at different concentrations.

It localises to the mitochondrion inner membrane. It functions in the pathway energy metabolism; oxidative phosphorylation. In terms of biological role, component of the cytochrome c oxidase, the last enzyme in the mitochondrial electron transport chain which drives oxidative phosphorylation. The respiratory chain contains 3 multisubunit complexes succinate dehydrogenase (complex II, CII), ubiquinol-cytochrome c oxidoreductase (cytochrome b-c1 complex, complex III, CIII) and cytochrome c oxidase (complex IV, CIV), that cooperate to transfer electrons derived from NADH and succinate to molecular oxygen, creating an electrochemical gradient over the inner membrane that drives transmembrane transport and the ATP synthase. Cytochrome c oxidase is the component of the respiratory chain that catalyzes the reduction of oxygen to water. Electrons originating from reduced cytochrome c in the intermembrane space (IMS) are transferred via the dinuclear copper A center (CU(A)) of subunit 2 and heme A of subunit 1 to the active site in subunit 1, a binuclear center (BNC) formed by heme A3 and copper B (CU(B)). The BNC reduces molecular oxygen to 2 water molecules using 4 electrons from cytochrome c in the IMS and 4 protons from the mitochondrial matrix. In Bos taurus (Bovine), this protein is Cytochrome c oxidase subunit 7C, mitochondrial (COX7C).